We begin with the raw amino-acid sequence, 65 residues long: Subtilisin inhibitor CLSI-I (65 aa).

This sequence belongs to the protease inhibitor I13 (potato type I serine protease inhibitor) family.

Inhibits subtilisin-type microbial serine proteases including proteinase K, subtilisin BPN', subtilisin Carlsberg, subtilisin E, A.oryzae protease and S.griseus alkaline protease. Weakly inhibits pronase E. Does not inhibit trypsin or chymotrypsin. The chain is Subtilisin inhibitor CLSI-I from Canavalia lineata (Beach bean).